Consider the following 366-residue polypeptide: tRNA/tmRNA (uracil-C(5))-methyltransferase (366 aa).

Residues Gln-190, Tyr-218, Asn-223, Glu-239, and Asp-299 each coordinate S-adenosyl-L-methionine. Cys-324 functions as the Nucleophile in the catalytic mechanism. Catalysis depends on Glu-358, which acts as the Proton acceptor.

The protein belongs to the class I-like SAM-binding methyltransferase superfamily. RNA M5U methyltransferase family. TrmA subfamily.

It catalyses the reaction uridine(54) in tRNA + S-adenosyl-L-methionine = 5-methyluridine(54) in tRNA + S-adenosyl-L-homocysteine + H(+). The catalysed reaction is uridine(341) in tmRNA + S-adenosyl-L-methionine = 5-methyluridine(341) in tmRNA + S-adenosyl-L-homocysteine + H(+). Dual-specificity methyltransferase that catalyzes the formation of 5-methyluridine at position 54 (m5U54) in all tRNAs, and that of position 341 (m5U341) in tmRNA (transfer-mRNA). The chain is tRNA/tmRNA (uracil-C(5))-methyltransferase from Escherichia coli O127:H6 (strain E2348/69 / EPEC).